We begin with the raw amino-acid sequence, 473 residues long: RWLGWQKFCWISCLFSSISSGLDPGEQAKVTTALDTAQFAINAINEEYIAQAKAIEEALKVSTQARSADLLRRQTELAKFGSKVGKALKAVQAASAIASFVFTFFMPSELDVITSLINERFNEVNAKLDRIDEKLDEMEKSIKADTAFNVFLSAWIKWEYKVRNGAKKLSDIRKAMGTKTQRIDQVKLAEEYVKYYETNNLDGNVLSLYRMAALPESITQRNIFDRFIAQFGCDITKLSELMILVQNIMTSAGQQKLTYYYFKGDQSRANSSFKDIQMYFFKIRQGFDDRVWHCRRNSLDYAKRDANKILKNMRGSSRESIVRAIFNELKVKYPWYTWAVAAVKSDRPRIRGLELRGSTYFRLEDRSDAKKVKGYFVVYEDTRSSASCSDITQAKTLLVFKKCDGCNSDYIYAADNILSKKRCGESTLERLVDFKQQCPVCHRWPYSITCYCANRVKQDSQNMGLYCISSQHH.

The first 21 residues, 1 to 21, serve as a signal peptide directing secretion; sequence RWLGWQKFCWISCLFSSISSG. Coiled-coil stretches lie at residues 40-60 and 116-147; these read AINA…EALK and LINE…ADTA.

In terms of tissue distribution, component of the acid-insoluble and acid-soluble organic matrix of the aragonitic skeleton (at protein level).

The protein localises to the secreted. The sequence is that of Cephalotoxin-like protein from Acropora millepora (Staghorn coral).